We begin with the raw amino-acid sequence, 235 residues long: Caveolin-1 (235 aa).

Residues 1 to 161 lie on the Cytoplasmic side of the membrane; that stretch reads MSTEQDIKTE…LVSLLALPFT (161 aa). Residues 29–72 form a disordered region; the sequence is GEAVVAPEEPKPKKNWFTFGKKKAAPTDETNIEEGGAPGDEPVK. An intramembrane region (helical) is located at residues 162-182; that stretch reads IIFAIFFGLLASINVFIIVPL. The Cytoplasmic portion of the chain corresponds to 183–235; it reads GKLLSIPGTLLAKLWNWLIHAIFDPIASAVGLIFSNFNIRKYGINQETTAPCV. Cysteine 234 is lipidated: S-palmitoyl cysteine.

Belongs to the caveolin family. Homooligomer containing 14-16 monomers per oligomer.

It localises to the golgi apparatus membrane. The protein resides in the cell membrane. Its subcellular location is the membrane. It is found in the caveola. Its function is as follows. May act as a scaffolding protein within caveolar membranes. Interacts directly with G-protein alpha subunits and can functionally regulate their activity. This is Caveolin-1 (cav-1) from Caenorhabditis elegans.